Reading from the N-terminus, the 383-residue chain is WAT1-related protein At3g18200 (383 aa).

Residues 1 to 16 (MCYQTSKKKRRSRKRR) are compositionally biased toward basic residues. The segment at 1-23 (MCYQTSKKKRRSRKRRAQEEKEK) is disordered. The next 10 helical transmembrane spans lie at 33 to 53 (VKLV…HIVS), 65 to 85 (VYPV…AYFF), 91 to 111 (PPLT…GITA), 126 to 146 (TFAS…ACAL), 158 to 178 (GVAK…ITLY), 204 to 224 (LTLG…WMVL), 237 to 257 (TLTS…ALFV), 272 to 292 (LFTI…LQTW), 300 to 320 (VFVA…AFLI), and 325 to 345 (LYSG…LVLW). EamA domains are found at residues 44 to 173 (FCFA…GGAT) and 216 to 344 (LSWA…YLVL).

This sequence belongs to the drug/metabolite transporter (DMT) superfamily. Plant drug/metabolite exporter (P-DME) (TC 2.A.7.4) family.

The protein localises to the membrane. In Arabidopsis thaliana (Mouse-ear cress), this protein is WAT1-related protein At3g18200.